Here is a 207-residue protein sequence, read N- to C-terminus: Macrophage immunometabolism regulator (207 aa).

Position 1 is an N-acetylmethionine (M1). A disordered region spans residues 1–41; sequence MEVDVNGESRSALTTLPLPVAEASSPGKAEAEKPRCSSTPC. Phosphoserine occurs at positions 25, 140, and 167.

The protein belongs to the UNC119-binding protein family. In terms of assembly, interacts with UNC119 and UNC119B; interaction preferentially takes place when UNC119 and UNC119B are unliganded with myristoylated proteins.

It localises to the cytoplasm. It is found in the cell projection. The protein resides in the cilium. In terms of biological role, regulates the macrophage function, by enhancing the resolution of inflammation and wound repair functions mediated by M2 macrophages. The regulation of macrophage function is, due at least in part, to its ability to inhibit glycolysis. May play also a role in trafficking of proteins via its interaction with UNC119 and UNC119B cargo adapters: may help the release of UNC119 and UNC119B cargo or the recycling of UNC119 and UNC119B. May play a role in ciliary membrane localization via its interaction with UNC119B and protein transport into photoreceptor cells. The polypeptide is Macrophage immunometabolism regulator (MACIR) (Bos taurus (Bovine)).